The sequence spans 187 residues: Elongation factor P (187 aa).

This sequence belongs to the elongation factor P family.

It localises to the cytoplasm. It participates in protein biosynthesis; polypeptide chain elongation. In terms of biological role, involved in peptide bond synthesis. Stimulates efficient translation and peptide-bond synthesis on native or reconstituted 70S ribosomes in vitro. Probably functions indirectly by altering the affinity of the ribosome for aminoacyl-tRNA, thus increasing their reactivity as acceptors for peptidyl transferase. This Prochlorococcus marinus (strain NATL1A) protein is Elongation factor P.